The primary structure comprises 463 residues: tRNA-splicing endonuclease subunit Sen2 (463 aa).

Residues Ser-32 and Ser-147 each carry the phosphoserine modification. A disordered region spans residues 120–213; sequence HDESTVQKIL…VASPSSLNGH (94 aa). 2 stretches are compositionally biased toward basic and acidic residues: residues 139–149 and 159–170; these read PYRERKGESPQ and SSLEGREGKDEL. Residues Tyr-367 and His-375 contribute to the active site. Residues Ser-406, Ser-409, and Ser-413 each carry the phosphoserine modification. Lys-414 is an active-site residue.

The protein belongs to the tRNA-intron endonuclease family. In terms of assembly, tRNA splicing endonuclease is a heterotetramer composed of TSEN2, TSEN15, TSEN34/LENG5 and TSEN54. tRNA splicing endonuclease complex also contains proteins of the pre-mRNA 3'-end processing machinery such as CLP1, CPSF1, CPSF4 and CSTF2.

It is found in the nucleus. Its subcellular location is the nucleolus. It catalyses the reaction pretRNA = a 3'-half-tRNA molecule with a 5'-OH end + a 5'-half-tRNA molecule with a 2',3'-cyclic phosphate end + an intron with a 2',3'-cyclic phosphate and a 5'-hydroxyl terminus.. Functionally, constitutes one of the two catalytic subunit of the tRNA-splicing endonuclease complex, a complex responsible for identification and cleavage of the splice sites in pre-tRNA. It cleaves pre-tRNA at the 5'- and 3'-splice sites to release the intron. The products are an intron and two tRNA half-molecules bearing 2',3'-cyclic phosphate and 5'-OH termini. There are no conserved sequences at the splice sites, but the intron is invariably located at the same site in the gene, placing the splice sites an invariant distance from the constant structural features of the tRNA body. Probably carries the active site for 5'-splice site cleavage. The tRNA splicing endonuclease is also involved in mRNA processing via its association with pre-mRNA 3'-end processing factors, establishing a link between pre-tRNA splicing and pre-mRNA 3'-end formation, suggesting that the endonuclease subunits function in multiple RNA-processing events. In Rattus norvegicus (Rat), this protein is tRNA-splicing endonuclease subunit Sen2 (Tsen2).